The following is a 475-amino-acid chain: Ribulose bisphosphate carboxylase large chain (475 aa).

The propeptide occupies 1–2 (MS). Proline 3 bears the N-acetylproline mark. Residue lysine 14 is modified to N6,N6,N6-trimethyllysine. Substrate-binding residues include asparagine 123 and threonine 173. Residue lysine 175 is the Proton acceptor of the active site. Residue lysine 177 participates in substrate binding. Residues lysine 201, aspartate 203, and glutamate 204 each coordinate Mg(2+). Lysine 201 bears the N6-carboxylysine mark. Histidine 294 serves as the catalytic Proton acceptor. Arginine 295, histidine 327, and serine 379 together coordinate substrate.

This sequence belongs to the RuBisCO large chain family. Type I subfamily. Heterohexadecamer of 8 large chains and 8 small chains. Mg(2+) serves as cofactor.

Its subcellular location is the plastid. It localises to the chloroplast. The enzyme catalyses 2 (2R)-3-phosphoglycerate + 2 H(+) = D-ribulose 1,5-bisphosphate + CO2 + H2O. It carries out the reaction D-ribulose 1,5-bisphosphate + O2 = 2-phosphoglycolate + (2R)-3-phosphoglycerate + 2 H(+). RuBisCO catalyzes two reactions: the carboxylation of D-ribulose 1,5-bisphosphate, the primary event in carbon dioxide fixation, as well as the oxidative fragmentation of the pentose substrate in the photorespiration process. Both reactions occur simultaneously and in competition at the same active site. The polypeptide is Ribulose bisphosphate carboxylase large chain (Bazzania trilobata (Greater whipwort)).